The chain runs to 127 residues: Fatty acid-binding protein, liver (127 aa).

Position 1 is an N-acetylmethionine (Met-1). At Ser-11 the chain carries Phosphoserine. N6-succinyllysine is present on residues Lys-31 and Lys-36. Phosphoserine is present on Ser-39. Lys-46 is subject to N6-succinyllysine. Thr-51 is subject to Phosphothreonine. Ser-56 is subject to Phosphoserine. An N6-succinyllysine mark is found at Lys-57, Lys-78, and Lys-90. Position 100 is a phosphoserine (Ser-100). Lys-121 carries the N6-succinyllysine modification.

The protein belongs to the calycin superfamily. Fatty-acid binding protein (FABP) family. In terms of assembly, monomer.

Its subcellular location is the cytoplasm. Its function is as follows. Plays a role in lipoprotein-mediated cholesterol uptake in hepatocytes. Binds cholesterol. Binds free fatty acids and their coenzyme A derivatives, bilirubin, and some other small molecules in the cytoplasm. May be involved in intracellular lipid transport. This Sus scrofa (Pig) protein is Fatty acid-binding protein, liver (FABP1).